The sequence spans 69 residues: Large ribosomal subunit protein bL31 (69 aa).

Belongs to the bacterial ribosomal protein bL31 family. Type A subfamily. As to quaternary structure, part of the 50S ribosomal subunit.

Binds the 23S rRNA. This Magnetococcus marinus (strain ATCC BAA-1437 / JCM 17883 / MC-1) protein is Large ribosomal subunit protein bL31.